Reading from the N-terminus, the 125-residue chain is Ribosome-binding factor A (125 aa).

This sequence belongs to the RbfA family. In terms of assembly, monomer. Binds 30S ribosomal subunits, but not 50S ribosomal subunits or 70S ribosomes.

The protein resides in the cytoplasm. Its function is as follows. One of several proteins that assist in the late maturation steps of the functional core of the 30S ribosomal subunit. Associates with free 30S ribosomal subunits (but not with 30S subunits that are part of 70S ribosomes or polysomes). Required for efficient processing of 16S rRNA. May interact with the 5'-terminal helix region of 16S rRNA. The chain is Ribosome-binding factor A from Paracidovorax citrulli (strain AAC00-1) (Acidovorax citrulli).